We begin with the raw amino-acid sequence, 332 residues long: L-lactate dehydrogenase A chain (332 aa).

Residues 29–57 (GAVG…VEDK) and Arg-99 each bind NAD(+). The substrate site is built by Arg-106, Asn-138, and Arg-169. Asn-138 is a binding site for NAD(+). The active-site Proton acceptor is His-193. Thr-248 lines the substrate pocket.

It belongs to the LDH/MDH superfamily. LDH family. In terms of assembly, homotetramer.

It is found in the cytoplasm. The enzyme catalyses (S)-lactate + NAD(+) = pyruvate + NADH + H(+). It participates in fermentation; pyruvate fermentation to lactate; (S)-lactate from pyruvate: step 1/1. Interconverts simultaneously and stereospecifically pyruvate and lactate with concomitant interconversion of NADH and NAD(+). In Python regius (Ball python), this protein is L-lactate dehydrogenase A chain (LDHA).